The primary structure comprises 507 residues: Probable DNA ligase (507 aa).

E209 contributes to the ATP binding site. K211 acts as the N6-AMP-lysine intermediate in catalysis. Residues R216, R231, E260, F300, R372, and K378 each coordinate ATP.

Belongs to the ATP-dependent DNA ligase family. The cofactor is Mg(2+).

The catalysed reaction is ATP + (deoxyribonucleotide)n-3'-hydroxyl + 5'-phospho-(deoxyribonucleotide)m = (deoxyribonucleotide)n+m + AMP + diphosphate.. DNA ligase that seals nicks in double-stranded DNA during DNA replication, DNA recombination and DNA repair. In Mycobacterium bovis (strain ATCC BAA-935 / AF2122/97), this protein is Probable DNA ligase.